Here is a 463-residue protein sequence, read N- to C-terminus: Ribulose bisphosphate carboxylase (463 aa).

Substrate is bound at residue Asn116. Lys171 acts as the Proton acceptor in catalysis. Lys173 contributes to the substrate binding site. The Mg(2+) site is built by Lys196, Asp198, and Glu199. An N6-carboxylysine modification is found at Lys196. The active-site Proton acceptor is His294. Substrate contacts are provided by Arg295, His328, and Ser375.

This sequence belongs to the RuBisCO large chain family. Type II subfamily. Homodimer. Mg(2+) is required as a cofactor.

The enzyme catalyses 2 (2R)-3-phosphoglycerate + 2 H(+) = D-ribulose 1,5-bisphosphate + CO2 + H2O. The catalysed reaction is D-ribulose 1,5-bisphosphate + O2 = 2-phosphoglycolate + (2R)-3-phosphoglycerate + 2 H(+). In terms of biological role, ruBisCO catalyzes two reactions: the carboxylation of D-ribulose 1,5-bisphosphate, the primary event in carbon dioxide fixation, as well as the oxidative fragmentation of the pentose substrate. Both reactions occur simultaneously and in competition at the same active site. The sequence is that of Ribulose bisphosphate carboxylase from Hydrogenovibrio marinus.